Consider the following 376-residue polypeptide: Putative transmembrane protein 183BP (376 aa).

Disordered stretches follow at residues 1–20 and 102–127; these read MARG…AMPK and AQEE…ELDG. The chain crosses the membrane as a helical span at residues 300 to 320; sequence LNFIFIPIVMGMIFTLFTINV.

Belongs to the TMEM183 family. Expressed in brain, lung, pancreas, thymus, intestine and blood. Not detected in heart, placenta, liver, muscle, kidney, spleen, prostate, testis, ovary and colon.

It localises to the membrane. In Homo sapiens (Human), this protein is Putative transmembrane protein 183BP.